The sequence spans 391 residues: tRNA(Met) cytidine acetate ligase (391 aa).

ATP-binding positions include 7–20, glycine 101, asparagine 153, and arginine 178; that span reads IAEY…HIYQ.

The protein belongs to the TmcAL family.

It localises to the cytoplasm. It catalyses the reaction cytidine(34) in elongator tRNA(Met) + acetate + ATP = N(4)-acetylcytidine(34) in elongator tRNA(Met) + AMP + diphosphate. Its function is as follows. Catalyzes the formation of N(4)-acetylcytidine (ac(4)C) at the wobble position of elongator tRNA(Met), using acetate and ATP as substrates. First activates an acetate ion to form acetyladenylate (Ac-AMP) and then transfers the acetyl group to tRNA to form ac(4)C34. The protein is tRNA(Met) cytidine acetate ligase of Latilactobacillus sakei subsp. sakei (strain 23K) (Lactobacillus sakei subsp. sakei).